A 344-amino-acid chain; its full sequence is Acireductone dioxygenase (344 aa).

Residues His-92, His-94, Glu-98, and His-137 each contribute to the Fe(2+) site. Residues His-92, His-94, Glu-98, and His-137 each coordinate Ni(2+).

Belongs to the acireductone dioxygenase (ARD) family. Requires Fe(2+) as cofactor. Ni(2+) serves as cofactor.

Its subcellular location is the cytoplasm. The protein resides in the nucleus. The catalysed reaction is 1,2-dihydroxy-5-(methylsulfanyl)pent-1-en-3-one + O2 = 4-methylsulfanyl-2-oxobutanoate + formate + 2 H(+). It carries out the reaction 1,2-dihydroxy-5-(methylsulfanyl)pent-1-en-3-one + O2 = 3-(methylsulfanyl)propanoate + CO + formate + 2 H(+). It participates in amino-acid biosynthesis; L-methionine biosynthesis via salvage pathway; L-methionine from S-methyl-5-thio-alpha-D-ribose 1-phosphate: step 5/6. Its function is as follows. Catalyzes 2 different reactions between oxygen and the acireductone 1,2-dihydroxy-3-keto-5-methylthiopentene (DHK-MTPene) depending upon the metal bound in the active site. Fe-containing acireductone dioxygenase (Fe-ARD) produces formate and 2-keto-4-methylthiobutyrate (KMTB), the alpha-ketoacid precursor of methionine in the methionine recycle pathway. Ni-containing acireductone dioxygenase (Ni-ARD) produces methylthiopropionate, carbon monoxide and formate, and does not lie on the methionine recycle pathway. In Leishmania major, this protein is Acireductone dioxygenase.